The following is a 359-amino-acid chain: DNA integrity scanning protein DisA (359 aa).

The region spanning 10–148 is the DAC domain; the sequence is ELDLLDIVQF…GNRRYTLKDI (139 aa). ATP is bound by residues glycine 77, leucine 95, and 108–112; that span reads MRHRT.

It belongs to the DisA family. In terms of assembly, homooctamer. Mg(2+) is required as a cofactor.

It carries out the reaction 2 ATP = 3',3'-c-di-AMP + 2 diphosphate. In terms of biological role, participates in a DNA-damage check-point that is active prior to asymmetric division when DNA is damaged. DisA forms globular foci that rapidly scan along the chromosomes during sporulation, searching for lesions. When a lesion is present, DisA pauses at the lesion site. This triggers a cellular response that culminates in a temporary block in sporulation initiation. Its function is as follows. Also has diadenylate cyclase activity, catalyzing the condensation of 2 ATP molecules into cyclic di-AMP (c-di-AMP). c-di-AMP acts as a signaling molecule that couples DNA integrity with progression of sporulation. The rise in c-di-AMP level generated by DisA while scanning the chromosome, operates as a positive signal that advances sporulation; upon encountering a lesion, the DisA focus arrests at the damaged site and halts c-di-AMP synthesis. The polypeptide is DNA integrity scanning protein DisA (Bacillus pumilus (strain SAFR-032)).